The chain runs to 547 residues: Tripartite motif-containing protein 5 (547 aa).

Alanine 2 is modified (N-acetylalanine). An RING-type zinc finger spans residues cysteine 15–arginine 59. Serine 86 carries the post-translational modification Phosphoserine. The segment at glutamine 91–valine 132 adopts a B box-type zinc-finger fold. Residues cysteine 96, histidine 99, cysteine 118, and histidine 124 each coordinate Zn(2+). A coiled-coil region spans residues valine 132–glutamine 225. Residues phenylalanine 186 to asparagine 199 are required for interaction with GABARAP and for autophagy. Residues proline 280 to serine 547 enclose the B30.2/SPRY domain.

This sequence belongs to the TRIM/RBCC family. As to quaternary structure, can form homodimers and homotrimers. In addition to lower-order dimerization, also exhibits a higher-order multimerization and both low- and high-order multimerizations are essential for its restriction activity. Interacts with BTBD1 and BTBD2. Interacts with PSMC4, PSMC5, PSMD7 and HSPA8/HSC70. Interacts (via B30.2/SPRY domain) with HSPA1A/B. Interacts with PSMC2, MAP3K7/TAK1, TAB2 and TAB3. Interacts with SQSTM1. Interacts with TRIM6 and TRIM34. Interacts with ULK1 (phosphorylated form), GABARAP, GABARAPL1, GABARAPL2, MAP1LC3A, MAP1LC3C and BECN1. Post-translationally, degraded in a proteasome-independent fashion in the absence of viral infection but in a proteasome-dependent fashion following exposure to restriction sensitive virus. Autoubiquitinated in a RING finger- and UBE2D2-dependent manner. Monoubiquitinated by TRIM21. Deubiquitinated by Yersinia YopJ. Ubiquitination may not lead to proteasomal degradation.

The protein localises to the cytoplasm. It localises to the nucleus. The enzyme catalyses S-ubiquitinyl-[E2 ubiquitin-conjugating enzyme]-L-cysteine + [acceptor protein]-L-lysine = [E2 ubiquitin-conjugating enzyme]-L-cysteine + N(6)-ubiquitinyl-[acceptor protein]-L-lysine.. The protein operates within protein modification; protein ubiquitination. Its function is as follows. Capsid-specific restriction factor that prevents infection from non-host-adapted retroviruses. Blocks viral replication early in the life cycle, after viral entry but before reverse transcription. In addition to acting as a capsid-specific restriction factor, also acts as a pattern recognition receptor that activates innate immune signaling in response to the retroviral capsid lattice. Binding to the viral capsid triggers its E3 ubiquitin ligase activity, and in concert with the heterodimeric ubiquitin conjugating enzyme complex UBE2V1-UBE2N (also known as UBC13-UEV1A complex) generates 'Lys-63'-linked polyubiquitin chains, which in turn are catalysts in the autophosphorylation of the MAP3K7/TAK1 complex (includes TAK1, TAB2, and TAB3). Activation of the MAP3K7/TAK1 complex by autophosphorylation results in the induction and expression of NF-kappa-B and MAPK-responsive inflammatory genes, thereby leading to an innate immune response in the infected cell. Plays a role in regulating autophagy through activation of autophagy regulator BECN1 by causing its dissociation from its inhibitors BCL2 and TAB2. The chain is Tripartite motif-containing protein 5 (TRIM5) from Ateles geoffroyi (Black-handed spider monkey).